The sequence spans 89 residues: Co-chaperonin GroES (89 aa).

Belongs to the GroES chaperonin family. As to quaternary structure, heptamer of 7 subunits arranged in a ring. Interacts with the chaperonin GroEL.

The protein localises to the cytoplasm. Its function is as follows. Together with the chaperonin GroEL, plays an essential role in assisting protein folding. The GroEL-GroES system forms a nano-cage that allows encapsulation of the non-native substrate proteins and provides a physical environment optimized to promote and accelerate protein folding. GroES binds to the apical surface of the GroEL ring, thereby capping the opening of the GroEL channel. The protein is Co-chaperonin GroES of Kosmotoga olearia (strain ATCC BAA-1733 / DSM 21960 / TBF 19.5.1).